The following is a 401-amino-acid chain: Tryptophan synthase beta chain (401 aa).

Lysine 91 is modified (N6-(pyridoxal phosphate)lysine).

It belongs to the TrpB family. Tetramer of two alpha and two beta chains. Pyridoxal 5'-phosphate is required as a cofactor.

The enzyme catalyses (1S,2R)-1-C-(indol-3-yl)glycerol 3-phosphate + L-serine = D-glyceraldehyde 3-phosphate + L-tryptophan + H2O. The protein operates within amino-acid biosynthesis; L-tryptophan biosynthesis; L-tryptophan from chorismate: step 5/5. Its function is as follows. The beta subunit is responsible for the synthesis of L-tryptophan from indole and L-serine. The chain is Tryptophan synthase beta chain from Lactococcus lactis subsp. cremoris (strain MG1363).